Reading from the N-terminus, the 80-residue chain is Small ribosomal subunit protein bS16 (80 aa).

Belongs to the bacterial ribosomal protein bS16 family.

The sequence is that of Small ribosomal subunit protein bS16 from Laribacter hongkongensis (strain HLHK9).